An 80-amino-acid chain; its full sequence is Sec-independent protein translocase protein TatA (80 aa).

The chain crosses the membrane as a helical span at residues 1–21; that stretch reads MGQIGIWQILIIALVILVLFG. The disordered stretch occupies residues 38–80; it reads SFKKGLNEEDKPAEPAAKIEGPSHEAKPAGEAAKDPRPADKQG. Residues 58 to 80 show a composition bias toward basic and acidic residues; sequence GPSHEAKPAGEAAKDPRPADKQG.

It belongs to the TatA/E family. In terms of assembly, the Tat system comprises two distinct complexes: a TatABC complex, containing multiple copies of TatA, TatB and TatC subunits, and a separate TatA complex, containing only TatA subunits. Substrates initially bind to the TatABC complex, which probably triggers association of the separate TatA complex to form the active translocon.

It localises to the cell inner membrane. In terms of biological role, part of the twin-arginine translocation (Tat) system that transports large folded proteins containing a characteristic twin-arginine motif in their signal peptide across membranes. TatA could form the protein-conducting channel of the Tat system. The sequence is that of Sec-independent protein translocase protein TatA from Erythrobacter litoralis (strain HTCC2594).